We begin with the raw amino-acid sequence, 104 residues long: Large ribosomal subunit protein eL42 (104 aa).

The tract at residues lysine 22–leucine 56 is disordered.

This sequence belongs to the eukaryotic ribosomal protein eL42 family.

This is Large ribosomal subunit protein eL42 (RPL44) from Encephalitozoon cuniculi (strain GB-M1) (Microsporidian parasite).